A 2075-amino-acid chain; its full sequence is Autophagy-related protein 2 homolog B (2075 aa).

The Chorein N-terminal domain occupies 13-107 (ACRYLLQRYL…LEMVFRPRPR (95 aa)). Ser255, Ser379, Ser496, Ser839, Ser885, Ser898, and Ser1007 each carry phosphoserine. Tyr1011 bears the Phosphotyrosine mark. Phosphoserine is present on residues Ser1015 and Ser1017. Thr1021 bears the Phosphothreonine mark. A disordered region spans residues 1373–1403 (KAEMKPGVPQRKPKVDSSARSSSHGPVLPEA). Residue Ser1525 is modified to Phosphoserine. Disordered stretches follow at residues 1570–1593 (TSPAKSYIPHSSPSQTPTRHGRHT), 1759–1792 (EPNLVVSFPGPKQASPNHRANSAEGGNGLEEDVS), and 2055–2075 (RNQIRPDVRQDESQKWRHGED). Polar residues predominate over residues 1578–1587 (PHSSPSQTPT). Over residues 2058–2075 (IRPDVRQDESQKWRHGED) the composition is skewed to basic and acidic residues.

It belongs to the ATG2 family. Interacts with WDR45/WIPI4.

It is found in the preautophagosomal structure membrane. Its subcellular location is the lipid droplet. It localises to the endoplasmic reticulum membrane. The enzyme catalyses a 1,2-diacyl-sn-glycero-3-phospho-L-serine(in) = a 1,2-diacyl-sn-glycero-3-phospho-L-serine(out). It catalyses the reaction a 1,2-diacyl-sn-glycero-3-phosphoethanolamine(in) = a 1,2-diacyl-sn-glycero-3-phosphoethanolamine(out). Its function is as follows. Lipid transfer protein required for both autophagosome formation and regulation of lipid droplet morphology and dispersion. Tethers the edge of the isolation membrane (IM) to the endoplasmic reticulum (ER) and mediates direct lipid transfer from ER to IM for IM expansion. Binds to the ER exit site (ERES), which is the membrane source for autophagosome formation, and extracts phospholipids from the membrane source and transfers them to ATG9 (ATG9A or ATG9B) to the IM for membrane expansion. Lipid transfer activity is enhanced by WDR45/WIPI4, which promotes ATG2B-association with phosphatidylinositol 3-monophosphate (PI3P)-containing membranes. This is Autophagy-related protein 2 homolog B from Mus musculus (Mouse).